The primary structure comprises 382 residues: uncharacterized protein (382 aa).

12 helical membrane passes run 14–34 (GLLL…LWLA), 45–65 (MVSS…GYLI), 75–95 (YLAS…VGFW), 102–122 (FIAG…LMCS), 131–151 (LLAA…LLVS), 157–177 (LLHV…PLLF), 204–224 (LGVN…GLMP), 231–251 (GMAN…GILG), 270–290 (VQVF…AMAP), 291–311 (ALFI…AWAC), 325–345 (ALLL…AMLM), and 349–369 (SDNL…LMLL).

The protein belongs to the major facilitator superfamily. YcaD (TC 2.A.1.26) family.

It is found in the cell inner membrane. This is an uncharacterized protein from Salmonella paratyphi A (strain ATCC 9150 / SARB42).